Consider the following 469-residue polypeptide: 3-isopropylmalate dehydratase large subunit (469 aa).

Cys-350, Cys-410, and Cys-413 together coordinate [4Fe-4S] cluster.

Belongs to the aconitase/IPM isomerase family. LeuC type 1 subfamily. In terms of assembly, heterodimer of LeuC and LeuD. The cofactor is [4Fe-4S] cluster.

It catalyses the reaction (2R,3S)-3-isopropylmalate = (2S)-2-isopropylmalate. Its pathway is amino-acid biosynthesis; L-leucine biosynthesis; L-leucine from 3-methyl-2-oxobutanoate: step 2/4. In terms of biological role, catalyzes the isomerization between 2-isopropylmalate and 3-isopropylmalate, via the formation of 2-isopropylmaleate. The sequence is that of 3-isopropylmalate dehydratase large subunit from Sinorhizobium fredii (strain NBRC 101917 / NGR234).